The chain runs to 164 residues: Peptide methionine sulfoxide reductase MsrA (164 aa).

Residue cysteine 16 is part of the active site.

This sequence belongs to the MsrA Met sulfoxide reductase family.

It carries out the reaction L-methionyl-[protein] + [thioredoxin]-disulfide + H2O = L-methionyl-(S)-S-oxide-[protein] + [thioredoxin]-dithiol. The enzyme catalyses [thioredoxin]-disulfide + L-methionine + H2O = L-methionine (S)-S-oxide + [thioredoxin]-dithiol. Functionally, has an important function as a repair enzyme for proteins that have been inactivated by oxidation. Catalyzes the reversible oxidation-reduction of methionine sulfoxide in proteins to methionine. In Clostridium tetani (strain Massachusetts / E88), this protein is Peptide methionine sulfoxide reductase MsrA.